Reading from the N-terminus, the 435-residue chain is Probable alpha-galactosidase B (435 aa).

Residues methionine 1–alanine 18 form the signal peptide. The cysteines at positions 41 and 73 are disulfide-linked. An N-linked (GlcNAc...) asparagine glycan is attached at asparagine 81. An intrachain disulfide couples cysteine 123 to cysteine 153. The active-site Nucleophile is the aspartate 151. Residues asparagine 158 and asparagine 176 are each glycosylated (N-linked (GlcNAc...) asparagine). Residue aspartate 221–alanine 225 participates in substrate binding. N-linked (GlcNAc...) asparagine glycosylation occurs at asparagine 232. Catalysis depends on aspartate 243, which acts as the Proton donor. A glycan (N-linked (GlcNAc...) asparagine) is linked at asparagine 378.

This sequence belongs to the glycosyl hydrolase 27 family.

It localises to the secreted. It catalyses the reaction Hydrolysis of terminal, non-reducing alpha-D-galactose residues in alpha-D-galactosides, including galactose oligosaccharides, galactomannans and galactolipids.. In terms of biological role, hydrolyzes a variety of simple alpha-D-galactoside as well as more complex molecules such as oligosaccharides and polysaccharides. This is Probable alpha-galactosidase B (agl1) from Penicillium simplicissimum.